The primary structure comprises 338 residues: Sulfotransferase 2B1 (338 aa).

3'-phosphoadenylyl sulfate is bound at residue 67 to 72 (KSGTNW). 2 residues coordinate substrate: tryptophan 95 and tryptophan 100. The active-site Proton acceptor is histidine 122. 3'-phosphoadenylyl sulfate contacts are provided by residues arginine 144, serine 152, tyrosine 207, 241–246 (SAFAAM), and 271–273 (RKG). Positions 301-338 (VQRFPWDTSEEDSSPDGQPDPEPSPSPASDDPNPGSSQ) are disordered. Over residues 327 to 338 (PASDDPNPGSSQ) the composition is skewed to low complexity.

The protein belongs to the sulfotransferase 1 family. In terms of tissue distribution, expressed at high levels in epididymis, intestine and uterus, and low levels in brain and hypothalamus. Isoform 2 is most prominent in the brain and spinal cord, with modest expression in the lung, skin and spleen. Isoform 1 is most prominently expressed in skin and small intestine, with modest expression in muscle and prostate.

The protein localises to the cytoplasm. It is found in the cytosol. The protein resides in the microsome. It localises to the nucleus. The enzyme catalyses an alcohol + 3'-phosphoadenylyl sulfate = an alkyl sulfate + adenosine 3',5'-bisphosphate + H(+). It carries out the reaction pregnenolone + 3'-phosphoadenylyl sulfate = pregnenolone sulfate + adenosine 3',5'-bisphosphate + H(+). It catalyses the reaction 3beta-hydroxyandrost-5-en-17-one + 3'-phosphoadenylyl sulfate = dehydroepiandrosterone 3-sulfate + adenosine 3',5'-bisphosphate + H(+). The catalysed reaction is cholesterol + 3'-phosphoadenylyl sulfate = cholesterol sulfate + adenosine 3',5'-bisphosphate + H(+). In terms of biological role, sulfotransferase that utilizes 3'-phospho-5'-adenylyl sulfate (PAPS) as sulfonate donor to catalyze the sulfate conjugation. Preferentially sulfonates cholesterol. Catalyzes sulfation of the 3beta-hydroxyl groups of steroids, such as, pregnenolone and dehydroepiandrosterone (DHEA). Cholesterol sulfation is approximately 10-fold higher than for pregnenolone and 20-fold higher than for DHEA. Plays a role in epidermal cholesterol metabolism and in the regulation of epidermal proliferation and differentiation. Strongly sulfonates pregnenolone, however is capable to sulfonate cholesterol with a high degree of efficiency. DHEA is a relatively poor substrate. The protein is Sulfotransferase 2B1 (Sult2b1) of Mus musculus (Mouse).